The following is a 29-amino-acid chain: Cytochrome b6-f complex subunit 8 (29 aa).

A helical transmembrane segment spans residues 3–23; it reads ILTLGWVGLLGLFTYSIAMVV.

The protein belongs to the PetN family. As to quaternary structure, the 4 large subunits of the cytochrome b6-f complex are cytochrome b6, subunit IV (17 kDa polypeptide, PetD), cytochrome f and the Rieske protein, while the 4 small subunits are PetG, PetL, PetM and PetN. The complex functions as a dimer.

Its subcellular location is the cellular thylakoid membrane. Component of the cytochrome b6-f complex, which mediates electron transfer between photosystem II (PSII) and photosystem I (PSI), cyclic electron flow around PSI, and state transitions. This is Cytochrome b6-f complex subunit 8 from Cyanothece sp. (strain PCC 7425 / ATCC 29141).